A 40-amino-acid polypeptide reads, in one-letter code: Biotin carboxylase (40 aa).

Residues 1 to 40 (ILVANRGEIAVRLLEEAPSPALTPELRITAYLPSGGPFVR) enclose the Biotin carboxylation domain. In terms of domain architecture, ATP-grasp spans 13-27 (LLEEAPSPALTPELR).

Acetyl-CoA carboxylase is a heterohexamer of biotin carboxyl carrier protein, biotin carboxylase and the two subunits of carboxyl transferase in a 2:2 complex. Mg(2+) is required as a cofactor. It depends on Mn(2+) as a cofactor.

The catalysed reaction is N(6)-biotinyl-L-lysyl-[protein] + hydrogencarbonate + ATP = N(6)-carboxybiotinyl-L-lysyl-[protein] + ADP + phosphate + H(+). It functions in the pathway lipid metabolism; malonyl-CoA biosynthesis; malonyl-CoA from acetyl-CoA: step 1/1. Its function is as follows. This protein is a component of the acetyl coenzyme A carboxylase complex; first, biotin carboxylase catalyzes the carboxylation of the carrier protein and then the transcarboxylase transfers the carboxyl group to form malonyl-CoA. The sequence is that of Biotin carboxylase from Populus euphratica (Euphrates poplar).